Consider the following 177-residue polypeptide: 2-C-methyl-D-erythritol 2,4-cyclodiphosphate synthase (177 aa).

Residues Asp8 and His10 each coordinate a divalent metal cation. 4-CDP-2-C-methyl-D-erythritol 2-phosphate-binding positions include 8–10 (DVH) and 34–35 (HS). His42 contacts a divalent metal cation. Residues 56-58 (DIG), 61-65 (FPDTD), 132-135 (TTEE), Phe139, and Arg142 each bind 4-CDP-2-C-methyl-D-erythritol 2-phosphate.

This sequence belongs to the IspF family. As to quaternary structure, homotrimer. A divalent metal cation serves as cofactor.

It catalyses the reaction 4-CDP-2-C-methyl-D-erythritol 2-phosphate = 2-C-methyl-D-erythritol 2,4-cyclic diphosphate + CMP. The protein operates within isoprenoid biosynthesis; isopentenyl diphosphate biosynthesis via DXP pathway; isopentenyl diphosphate from 1-deoxy-D-xylulose 5-phosphate: step 4/6. In terms of biological role, involved in the biosynthesis of isopentenyl diphosphate (IPP) and dimethylallyl diphosphate (DMAPP), two major building blocks of isoprenoid compounds. Catalyzes the conversion of 4-diphosphocytidyl-2-C-methyl-D-erythritol 2-phosphate (CDP-ME2P) to 2-C-methyl-D-erythritol 2,4-cyclodiphosphate (ME-CPP) with a corresponding release of cytidine 5-monophosphate (CMP). This is 2-C-methyl-D-erythritol 2,4-cyclodiphosphate synthase from Agathobacter rectalis (strain ATCC 33656 / DSM 3377 / JCM 17463 / KCTC 5835 / VPI 0990) (Eubacterium rectale).